Consider the following 503-residue polypeptide: MLLADVVATSTAVAATRSRTAKVAAIAGLLRGLDPADAELTAVVAAYLGGSLRQRRTGLGGRSLSGLPAPAGEASLEVAEVDRRFEEVAALSGPGSAGRRAAAVADLFARATGEEQRWLRGVVAGELRQGALDALVQDAAAAVAGVPGPDVRRAAMLAGSTVQAVVAALRGGAAELAGFGLHVGRPLLPMLAASTTSVAEAVAGFAGPVAVDTKLDGIRIQVHRGPEGVRIATRTLEDITARLPEVVEVVRELPARAFVLDGEALVLDGSGRPKAFQDTASRTAQASGDAVVPYFFDVLHLDGADLLDVALRERLAALDGFVPPRWRTPRLVTADPAAAAEFAAQALAGGHEGVVVKDLDSPYAAGRRGGAWVKVKPVHTLDLVVLAVERGSGRRAGWLSNVHLGARDPATGGFVMLGKTFKGMTDETLAWQTARFRELQTGEDGYVVTVRPEQVVEVAFDGLQRSTRYPGGVALRFARVVRYREDKTAAEADTLETVLALAR.

Asp-212 lines the ATP pocket. Lys-214 serves as the catalytic N6-AMP-lysine intermediate. 6 residues coordinate ATP: Arg-219, Arg-234, Glu-263, Phe-296, Arg-368, and Lys-374.

The protein belongs to the ATP-dependent DNA ligase family. Requires Mg(2+) as cofactor.

The enzyme catalyses ATP + (deoxyribonucleotide)n-3'-hydroxyl + 5'-phospho-(deoxyribonucleotide)m = (deoxyribonucleotide)n+m + AMP + diphosphate.. Functionally, DNA ligase that seals nicks in double-stranded DNA during DNA replication, DNA recombination and DNA repair. The polypeptide is Probable DNA ligase (Kineococcus radiotolerans (strain ATCC BAA-149 / DSM 14245 / SRS30216)).